We begin with the raw amino-acid sequence, 398 residues long: Acetyl-CoA acetyltransferase erg10B, cytosolic (398 aa).

Cys92 functions as the Acyl-thioester intermediate in the catalytic mechanism. Tyr187 provides a ligand contact to K(+). Residues Asn229 and Lys232 each coordinate CoA. K(+)-binding residues include Ala249, Pro250, and Ser252. Position 253 (Ser253) interacts with CoA. K(+) is bound at residue Val350. Active-site proton acceptor residues include His354 and Cys384. Asn385 is a chloride binding site.

This sequence belongs to the thiolase-like superfamily. Thiolase family. As to quaternary structure, homotetramer. It depends on K(+) as a cofactor.

It is found in the cytoplasm. The protein resides in the cytosol. It carries out the reaction 2 acetyl-CoA = acetoacetyl-CoA + CoA. Its pathway is metabolic intermediate biosynthesis; (R)-mevalonate biosynthesis; (R)-mevalonate from acetyl-CoA: step 1/3. With respect to regulation, activity is increased by monovalent cations such as K(+), Rb(+) or Cs(+). Functionally, acetyl-CoA acetyltransferase; part of the first module of ergosterol biosynthesis pathway that includes the early steps of the pathway, conserved across all eukaryotes, and which results in the formation of mevalonate from acetyl-coenzyme A (acetyl-CoA). In this module, the cytosolic acetyl-CoA acetyltransferase erg10B catalyzes the formation of acetoacetyl-CoA. The hydroxymethylglutaryl-CoA synthases AFUA_8G07210 and AFUA_3G10660 then condense acetyl-CoA with acetoacetyl-CoA to form HMG-CoA. The rate-limiting step of the early module is the reduction to mevalonate by the 3-hydroxy-3-methylglutaryl-coenzyme A (HMG-CoA) reductases hmg1 and hmg2. Mevalonate is also a precursor for the extracellular siderophore triacetylfusarinine C (TAFC). This Aspergillus fumigatus (strain CBS 144.89 / FGSC A1163 / CEA10) (Neosartorya fumigata) protein is Acetyl-CoA acetyltransferase erg10B, cytosolic.